The chain runs to 191 residues: Signal peptidase IB (191 aa).

The Cytoplasmic segment spans residues 1–7; the sequence is MKKELLE. The helical transmembrane segment at 8–28 threads the bilayer; the sequence is WIISIAVAFVILFIVGKFIVT. Residues 29 to 191 lie on the Extracellular side of the membrane; that stretch reads PYTIKGESMD…HNFNPENTKN (163 aa). Active-site residues include Ser-36 and Lys-77.

Belongs to the peptidase S26 family.

It localises to the cell membrane. It carries out the reaction Cleavage of hydrophobic, N-terminal signal or leader sequences from secreted and periplasmic proteins.. In terms of biological role, essential for cell viability. This Staphylococcus aureus (strain Mu50 / ATCC 700699) protein is Signal peptidase IB (spsB).